The chain runs to 130 residues: Chaperone protein SycT (130 aa).

As to quaternary structure, binds to YopT.

Functions as a specific chaperone for YopT. This chain is Chaperone protein SycT (sycT), found in Yersinia enterocolitica.